A 239-amino-acid polypeptide reads, in one-letter code: Increased recombination centers protein 22-1 (239 aa).

The signal sequence occupies residues 1–19 (MKLSTIFTAFAATIATVAG). Topologically, residues 20–161 (YETTGSKQTV…AAVSFFDPRL (142 aa)) are lumenal. The helical transmembrane segment at 162-182 (IFLELVLLITFAGLIYVGYEI) threads the bilayer. Topologically, residues 183–239 (WGKQYFKGVAPVKAKKVSAAKASSPVASGPSTTSATGYDTNWIPESHLKQKKTKKVN) are cytoplasmic. Residues 201–213 (AAKASSPVASGPS) show a composition bias toward low complexity. The segment at 201–222 (AAKASSPVASGPSTTSATGYDT) is disordered.

This sequence belongs to the IRC22 family.

Its subcellular location is the endoplasmic reticulum membrane. Its function is as follows. Is probably involved in a pathway contributing to genomic integrity. The sequence is that of Increased recombination centers protein 22-1 (IRC22-1) from Candida albicans (strain SC5314 / ATCC MYA-2876) (Yeast).